Here is a 540-residue protein sequence, read N- to C-terminus: Chaperonin GroEL (540 aa).

ATP is bound by residues 30–33, K51, 87–91, G415, and D495; these read TLGP and DGTTT.

Belongs to the chaperonin (HSP60) family. Forms a cylinder of 14 subunits composed of two heptameric rings stacked back-to-back. Interacts with the co-chaperonin GroES.

It is found in the cytoplasm. It carries out the reaction ATP + H2O + a folded polypeptide = ADP + phosphate + an unfolded polypeptide.. Functionally, together with its co-chaperonin GroES, plays an essential role in assisting protein folding. The GroEL-GroES system forms a nano-cage that allows encapsulation of the non-native substrate proteins and provides a physical environment optimized to promote and accelerate protein folding. The chain is Chaperonin GroEL from Rhodothermus marinus (Rhodothermus obamensis).